A 450-amino-acid chain; its full sequence is Phosphoglucosamine mutase 2 (450 aa).

Ser101 (phosphoserine intermediate) is an active-site residue. Residues Ser101, Asp245, Asp247, and Asp249 each coordinate Mg(2+). Ser101 carries the phosphoserine modification.

It belongs to the phosphohexose mutase family. The cofactor is Mg(2+). Post-translationally, activated by phosphorylation.

The catalysed reaction is alpha-D-glucosamine 1-phosphate = D-glucosamine 6-phosphate. Its function is as follows. Catalyzes the conversion of glucosamine-6-phosphate to glucosamine-1-phosphate. This Shewanella frigidimarina (strain NCIMB 400) protein is Phosphoglucosamine mutase 2.